Reading from the N-terminus, the 40-residue chain is Snaclec tokaracetin subunit beta (40 aa).

C2 and C13 form a disulfide bridge. The 32-residue stretch at 9–40 folds into the C-type lectin domain; it reads YDEHCYRVFQQKMNWEDAEKFCTQQHKGXHLX.

The protein belongs to the snaclec family. As to quaternary structure, heterodimer of subunits alpha and beta; disulfide-linked. In terms of tissue distribution, expressed by the venom gland.

It localises to the secreted. Functionally, platelet antagonist that specifically and reversibly binds to a site on platelet glycoprotein Ibalpha (GP1BA) close to or identical with the site for vWF binding. It inhibits the binding of vWF to platelets and vWF-dependent shear-induced platelet aggregation. In Protobothrops tokarensis (Tokara habu), this protein is Snaclec tokaracetin subunit beta.